An 821-amino-acid polypeptide reads, in one-letter code: BDNF/NT-3 growth factors receptor (821 aa).

An N-terminal signal peptide occupies residues 1–31 (MSPWLKWHGPAMARLWGLCLLVLGFWRASLA). Disulfide bonds link cysteine 32-cysteine 38 and cysteine 36-cysteine 45. Residues 32-61 (CPTSCKCSSARIWCTEPSPGIVAFPRLEPN) enclose the LRRNT domain. Topologically, residues 32-429 (CPTSCKCSSA…DVADQSNREH (398 aa)) are extracellular. Asparagine 67, asparagine 95, and asparagine 121 each carry an N-linked (GlcNAc...) asparagine glycan. LRR repeat units lie at residues 92–113 (GLRNLTIVDSGLKFVAYKAFLK) and 116–137 (NLRHINFTRNKLTSLSRRHFRH). The LRRCT domain maps to 148–196 (NPFTCSCDIMWLKTLQETKSSPDTQDLYCLNESSKNMPLANLQIPNCGL). 2 disulfide bridges follow: cysteine 152-cysteine 176 and cysteine 154-cysteine 194. N-linked (GlcNAc...) asparagine glycans are attached at residues asparagine 178, asparagine 205, asparagine 241, asparagine 254, asparagine 280, asparagine 325, asparagine 338, asparagine 350, and asparagine 411. Ig-like C2-type domains are found at residues 197–282 (PSAR…VNLT) and 301–365 (WCIP…MAKN). Cysteine 218 and cysteine 266 form a disulfide bridge. The cysteines at positions 302 and 345 are disulfide-linked. The helical transmembrane segment at 430-453 (LSVYAVVVIASVVGFCLLVMLLLL) threads the bilayer. Residues 454-465 (KLARHSKFGMKG) are interaction with MAPK8IP3/JIP3. The Cytoplasmic segment spans residues 454–821 (KLARHSKFGM…ASPVYLDILG (368 aa)). The segment at 474–497 (DDSASPLHHISNGSNTPSSSEGGP) is disordered. Residues 484–494 (SNGSNTPSSSE) show a composition bias toward polar residues. Tyrosine 515 carries the phosphotyrosine modification. The region spanning 537 to 806 (IVLKRELGEG…KNIKSIHTLL (270 aa)) is the Protein kinase domain. Residues 543 to 551 (LGEGAFGKV) and lysine 571 contribute to the ATP site. Aspartate 675 functions as the Proton acceptor in the catalytic mechanism. Phosphotyrosine; by autocatalysis occurs at positions 701, 705, 706, and 816.

It belongs to the protein kinase superfamily. Tyr protein kinase family. Insulin receptor subfamily. In terms of assembly, exists in a dynamic equilibrium between monomeric (low affinity) and dimeric (high affinity) structures. Interacts (phosphorylated upon activation by BDNF) with SHC1; mediates SHC1 phosphorylation and activation. Interacts (phosphorylated upon activation by BDNF) with PLCG1 and/or PLCG2; mediates PLCG1 phosphorylation and activation. Interacts with SH2B1 and SH2B2. Interacts with NGFR; may regulate the ligand specificity of the receptor. Interacts with SORCS2; this interaction is important for normal targeting to post-synaptic densities in response to high-frequency stimulation. Interacts (phosphorylated upon ligand-binding) with SH2D1A; regulates NTRK2. Interacts with SQSTM1 and KIDINS220. Interacts (phosphorylated upon ligand-binding) with FRS2; activates the MAPK signaling pathway. Interacts with APPL1. Interacts with MAPK8IP3/JIP3 and KLC1; interaction with KLC1 is mediated by MAPK8IP3/JIP3. Interacts with SORL1; this interaction facilitates NTRK2 trafficking between synaptic plasma membranes, postsynaptic densities and cell soma, hence positively regulates BDNF signaling. Interacts with SLITRK2. In terms of processing, phosphorylated. Undergoes ligand-mediated autophosphorylation that is required for interaction with SHC1 and PLCG1 and other downstream effectors. Some isoforms are not phosphorylated. Post-translationally, ubiquitinated. Undergoes polyubiquitination upon activation; regulated by NGFR. Ubiquitination regulates the internalization of the receptor. Expressed in the brain, in neurons (at protein level). Detected in hippocampus (at protein level). Widely expressed in the central and peripheral nervous system. The different forms are differentially expressed in various cell types. Isoform GP95-TRKB is specifically expressed in glial cells.

The protein localises to the cell membrane. It is found in the endosome membrane. It localises to the early endosome membrane. The protein resides in the cell projection. Its subcellular location is the axon. The protein localises to the dendrite. It is found in the cytoplasm. It localises to the perinuclear region. The protein resides in the postsynaptic density. It catalyses the reaction L-tyrosyl-[protein] + ATP = O-phospho-L-tyrosyl-[protein] + ADP + H(+). Its activity is regulated as follows. The formation of active receptors dimers able to fully transduce the ligand-mediated signal, may be negatively regulated by the formation of inactive heterodimers with the non-catalytic isoforms. The neuronal activity and the influx of calcium positively regulate the kinase activity and the internalization of the receptor which are both important for active signaling. Regulated by NGFR that may control the internalization of the receptor. NGFR may also stimulate the activation by BDNF compared to NTF3 and NTF4. SH2D1A inhibits the autophosphorylation of the receptor, and alters the recruitment and activation of downstream effectors and signaling cascades. Its function is as follows. Receptor tyrosine kinase involved in the development and the maturation of the central and the peripheral nervous systems through regulation of neuron survival, proliferation, migration, differentiation, and synapse formation and plasticity. Receptor for BDNF/brain-derived neurotrophic factor and NTF4/neurotrophin-4. Alternatively can also bind NTF3/neurotrophin-3 which is less efficient in activating the receptor but regulates neuron survival through NTRK2. Upon ligand-binding, undergoes homodimerization, autophosphorylation and activation. Recruits, phosphorylates and/or activates several downstream effectors including SHC1, FRS2, SH2B1, SH2B2 and PLCG1 that regulate distinct overlapping signaling cascades. Through SHC1, FRS2, SH2B1, SH2B2 activates the GRB2-Ras-MAPK cascade that regulates for instance neuronal differentiation including neurite outgrowth. Through the same effectors controls the Ras-PI3 kinase-AKT1 signaling cascade that mainly regulates growth and survival. Through PLCG1 and the downstream protein kinase C-regulated pathways controls synaptic plasticity. Thereby, plays a role in learning and memory by regulating both short term synaptic function and long-term potentiation. PLCG1 also leads to NF-Kappa-B activation and the transcription of genes involved in cell survival. Hence, it is able to suppress anoikis, the apoptosis resulting from loss of cell-matrix interactions. Isoform GP95-TRKB may also play a role in neutrophin-dependent calcium signaling in glial cells and mediate communication between neurons and glia. The sequence is that of BDNF/NT-3 growth factors receptor from Mus musculus (Mouse).